Here is a 355-residue protein sequence, read N- to C-terminus: Peptide chain release factor 1 (355 aa).

At Gln-233 the chain carries N5-methylglutamine. A compositionally biased stretch (basic and acidic residues) spans Glu-283–Lys-293. The tract at residues Glu-283–Arg-304 is disordered.

It belongs to the prokaryotic/mitochondrial release factor family. In terms of processing, methylated by PrmC. Methylation increases the termination efficiency of RF1.

The protein localises to the cytoplasm. Functionally, peptide chain release factor 1 directs the termination of translation in response to the peptide chain termination codons UAG and UAA. In Finegoldia magna (strain ATCC 29328 / DSM 20472 / WAL 2508) (Peptostreptococcus magnus), this protein is Peptide chain release factor 1.